Reading from the N-terminus, the 176-residue chain is Inner membrane-spanning protein YciB (176 aa).

The next 6 helical transmembrane spans lie at 3 to 23, 24 to 44, 49 to 69, 72 to 92, 121 to 141, and 149 to 169; these read FLFD…WGIF, TATA…AFRH, TMLW…LVLH, KFIQ…LLAA, VAWA…VHNF, and FKLF…SLWL.

This sequence belongs to the YciB family.

Its subcellular location is the cell inner membrane. Plays a role in cell envelope biogenesis, maintenance of cell envelope integrity and membrane homeostasis. This chain is Inner membrane-spanning protein YciB, found in Burkholderia orbicola (strain MC0-3).